Reading from the N-terminus, the 191-residue chain is Ribonuclease M5 1 (191 aa).

The region spanning 10-93 (KEVIVVEGKD…AFLTKHDAAP (84 aa)) is the Toprim domain. Glu16, Asp62, and Asp64 together coordinate Mg(2+).

The protein belongs to the ribonuclease M5 family. Mg(2+) is required as a cofactor.

The protein resides in the cytoplasm. It carries out the reaction Endonucleolytic cleavage of RNA, removing 21 and 42 nucleotides, respectively, from the 5'- and 3'-termini of a 5S-rRNA precursor.. Required for correct processing of both the 5' and 3' ends of 5S rRNA precursor. Cleaves both sides of a double-stranded region yielding mature 5S rRNA in one step. The protein is Ribonuclease M5 1 of Ligilactobacillus salivarius (strain CECT 5713) (Lactobacillus salivarius).